Consider the following 333-residue polypeptide: Adenosine deaminase (333 aa).

Residues H12 and H14 each coordinate Zn(2+). H14, D16, and G170 together coordinate substrate. Position 197 (H197) interacts with Zn(2+). E200 serves as the catalytic Proton donor. D278 lines the Zn(2+) pocket. D279 provides a ligand contact to substrate.

This sequence belongs to the metallo-dependent hydrolases superfamily. Adenosine and AMP deaminases family. Adenosine deaminase subfamily. Requires Zn(2+) as cofactor.

It catalyses the reaction adenosine + H2O + H(+) = inosine + NH4(+). It carries out the reaction 2'-deoxyadenosine + H2O + H(+) = 2'-deoxyinosine + NH4(+). Its function is as follows. Catalyzes the hydrolytic deamination of adenosine and 2-deoxyadenosine. This is Adenosine deaminase from Shigella flexneri serotype 5b (strain 8401).